Here is a 205-residue protein sequence, read N- to C-terminus: GTP cyclohydrolase-2 (205 aa).

Residue 49–53 (RIHSE) coordinates GTP. Zn(2+)-binding residues include cysteine 54, cysteine 65, and cysteine 67. Residues glutamine 70, 92 to 94 (EGR), and threonine 114 each bind GTP. Aspartate 126 serves as the catalytic Proton acceptor. Arginine 128 acts as the Nucleophile in catalysis. GTP is bound by residues threonine 149 and lysine 154.

Belongs to the GTP cyclohydrolase II family. The cofactor is Zn(2+).

The enzyme catalyses GTP + 4 H2O = 2,5-diamino-6-hydroxy-4-(5-phosphoribosylamino)-pyrimidine + formate + 2 phosphate + 3 H(+). The protein operates within cofactor biosynthesis; riboflavin biosynthesis; 5-amino-6-(D-ribitylamino)uracil from GTP: step 1/4. In terms of biological role, catalyzes the conversion of GTP to 2,5-diamino-6-ribosylamino-4(3H)-pyrimidinone 5'-phosphate (DARP), formate and pyrophosphate. This chain is GTP cyclohydrolase-2, found in Shewanella amazonensis (strain ATCC BAA-1098 / SB2B).